Reading from the N-terminus, the 767-residue chain is Protein transport protein Sec23B (767 aa).

Alanine 2 carries the N-acetylalanine modification. Zn(2+) contacts are provided by cysteine 61, cysteine 66, cysteine 85, and cysteine 88. The residue at position 564 (lysine 564) is an N6-acetyllysine. The stretch at 634–720 (PEPVLLDSSS…EHGGSQARFL (87 aa)) is one Gelsolin-like repeat.

This sequence belongs to the SEC23/SEC24 family. SEC23 subfamily. COPII is composed of at least five proteins: the Sec23/24 complex, the Sec13/31 complex and Sar1. Interacts with SAR1A. In terms of tissue distribution, ubiquitously expressed.

The protein resides in the cytoplasmic vesicle. The protein localises to the COPII-coated vesicle membrane. It is found in the endoplasmic reticulum membrane. It localises to the cytoplasm. Its subcellular location is the cytosol. Its function is as follows. Component of the coat protein complex II (COPII) which promotes the formation of transport vesicles from the endoplasmic reticulum (ER). The coat has two main functions, the physical deformation of the endoplasmic reticulum membrane into vesicles and the selection of cargo molecules for their transport to the Golgi complex. This Homo sapiens (Human) protein is Protein transport protein Sec23B.